The sequence spans 416 residues: Deferrochelatase (416 aa).

Positions 1–28 form a signal peptide, tat-type signal; the sequence is MSDEQKKPEQIHRRDILKWGAMAGAAVA. Residue 241–243 participates in heme b binding; the sequence is GTG. The disordered stretch occupies residues 293–318; the sequence is QEDTFGRRKSSGAPFGQKKETDPVKL. Residues His-326 and Arg-339 each coordinate heme b.

The protein belongs to the DyP-type peroxidase family. As to quaternary structure, component of the iron transporter efeUOB/M complex composed of EfeU, EfeM and EfeB; EfeU is essential for the complex formation. It depends on heme b as a cofactor. Post-translationally, exported by the Tat system. The position of the signal peptide cleavage has not been experimentally proven.

The protein resides in the secreted. It localises to the cell membrane. The enzyme catalyses heme b + 2 H(+) = protoporphyrin IX + Fe(2+). It carries out the reaction 2 Fe(2+) + H2O2 + 2 H(+) = 2 Fe(3+) + 2 H2O. Functionally, involved in the recovery of exogenous heme iron. Extracts iron from heme while preserving the protoporphyrin ring intact. Part of the iron transporter system efeUOB/M involved in iron import. Catalyzes the peroxide-mediated oxidation of Fe(2+) into Fe(3+); EfeM binds Fe(3+) and delivers it to the cell membrane permease EfeU. The protein is Deferrochelatase of Bacillus subtilis (strain 168).